The chain runs to 423 residues: Tegument protein UL43 (423 aa).

The span at 1 to 12 shows a compositional bias: polar residues; sequence MEKTPAETTAVS. The segment at 1-46 is disordered; that stretch reads MEKTPAETTAVSAGNVPRDSIPCITNVSADTRGRTRPSRPATVPQR.

The protein belongs to the herpesviridae US22 family.

Its subcellular location is the virion tegument. This Homo sapiens (Human) protein is Tegument protein UL43 (UL43).